A 269-amino-acid chain; its full sequence is MRYTILTKGDSKSNALKHKMMNYMKDFRMIEDSENPEIVISVGGDGTLLQAFHQYSHMLSKVAFVGVHTGHLGFYADWLPHEVEKLIIEINNSEFQVIEYPLLEIIMRYNDNGYETRYLALNEATMKTENGSTLVVDVNLRGKHFERFRGDGLCVSTPSGSTAYNKALGGALIHPSLEAMQITEIASINNRVFRTVGSPLVLPKHHTCLISPVNHDTIRMTIDHVSIKHKNVNSIQYRVANEKVRFARFRPFPFWKRVHDSFISSDEER.

The active-site Proton acceptor is D45. Residues 45–46 (DG), 122–123 (NE), R149, D151, and A186 contribute to the NAD(+) site.

The protein belongs to the NAD kinase family. It depends on a divalent metal cation as a cofactor.

It is found in the cytoplasm. It catalyses the reaction NAD(+) + ATP = ADP + NADP(+) + H(+). Its function is as follows. Involved in the regulation of the intracellular balance of NAD and NADP, and is a key enzyme in the biosynthesis of NADP. Catalyzes specifically the phosphorylation on 2'-hydroxyl of the adenosine moiety of NAD to yield NADP. This is NAD kinase from Staphylococcus aureus (strain Mu3 / ATCC 700698).